Here is a 407-residue protein sequence, read N- to C-terminus: Melanoma-associated antigen B6 (407 aa).

The disordered stretch occupies residues 1 to 175 (MPRGHKSKLR…YDVAAEGEDE (175 aa)). Polar residues-rich tracts occupy residues 18-29 (TNGQPQGLTGPQ), 57-71 (DASI…SPTG), 94-113 (PSTS…SPTG), and 136-155 (PSTS…SPTG). Positions 195-394 (VKKKACTLAQ…GLYPHLYEDA (200 aa)) constitute an MAGE domain.

Expressed in testis. Not expressed in other normal tissues, but is expressed in tumors of different histological origins.

The sequence is that of Melanoma-associated antigen B6 (MAGEB6) from Homo sapiens (Human).